The sequence spans 341 residues: S-adenosylmethionine:tRNA ribosyltransferase-isomerase (341 aa).

Belongs to the QueA family. Monomer.

The protein resides in the cytoplasm. It catalyses the reaction 7-aminomethyl-7-carbaguanosine(34) in tRNA + S-adenosyl-L-methionine = epoxyqueuosine(34) in tRNA + adenine + L-methionine + 2 H(+). The protein operates within tRNA modification; tRNA-queuosine biosynthesis. Transfers and isomerizes the ribose moiety from AdoMet to the 7-aminomethyl group of 7-deazaguanine (preQ1-tRNA) to give epoxyqueuosine (oQ-tRNA). The protein is S-adenosylmethionine:tRNA ribosyltransferase-isomerase of Clostridium botulinum (strain Kyoto / Type A2).